Reading from the N-terminus, the 87-residue chain is HssA/B-like protein 8 (87 aa).

The segment covering 1–22 has biased composition (polar residues); that stretch reads MSILSALTSISNPMKSTKSSVA. A disordered region spans residues 1–24; it reads MSILSALTSISNPMKSTKSSVANG.

This sequence belongs to the hssA/B family.

This chain is HssA/B-like protein 8 (hssl8), found in Dictyostelium discoideum (Social amoeba).